Reading from the N-terminus, the 432-residue chain is 23S rRNA (uracil(1939)-C(5))-methyltransferase RlmD (432 aa).

One can recognise a TRAM domain in the interval 1–53 (MPIGKIESLDHEARGITRQEGKAIFVDGALPGETVEYASFRRKSKFELAHLVH). C66, C72, C75, and C154 together coordinate [4Fe-4S] cluster. Q263, F292, N297, E313, N341, and D362 together coordinate S-adenosyl-L-methionine. C388 serves as the catalytic Nucleophile.

The protein belongs to the class I-like SAM-binding methyltransferase superfamily. RNA M5U methyltransferase family. RlmD subfamily.

It catalyses the reaction uridine(1939) in 23S rRNA + S-adenosyl-L-methionine = 5-methyluridine(1939) in 23S rRNA + S-adenosyl-L-homocysteine + H(+). In terms of biological role, catalyzes the formation of 5-methyl-uridine at position 1939 (m5U1939) in 23S rRNA. This is 23S rRNA (uracil(1939)-C(5))-methyltransferase RlmD from Dechloromonas aromatica (strain RCB).